Here is a 376-residue protein sequence, read N- to C-terminus: UDP-N-acetylglucosamine--N-acetylmuramyl-(pentapeptide) pyrophosphoryl-undecaprenol N-acetylglucosamine transferase (376 aa).

Residues 14-16 (TGG), N128, R169, S201, I256, and Q301 contribute to the UDP-N-acetyl-alpha-D-glucosamine site.

The protein belongs to the glycosyltransferase 28 family. MurG subfamily.

The protein resides in the cell inner membrane. It carries out the reaction di-trans,octa-cis-undecaprenyl diphospho-N-acetyl-alpha-D-muramoyl-L-alanyl-D-glutamyl-meso-2,6-diaminopimeloyl-D-alanyl-D-alanine + UDP-N-acetyl-alpha-D-glucosamine = di-trans,octa-cis-undecaprenyl diphospho-[N-acetyl-alpha-D-glucosaminyl-(1-&gt;4)]-N-acetyl-alpha-D-muramoyl-L-alanyl-D-glutamyl-meso-2,6-diaminopimeloyl-D-alanyl-D-alanine + UDP + H(+). Its pathway is cell wall biogenesis; peptidoglycan biosynthesis. Its function is as follows. Cell wall formation. Catalyzes the transfer of a GlcNAc subunit on undecaprenyl-pyrophosphoryl-MurNAc-pentapeptide (lipid intermediate I) to form undecaprenyl-pyrophosphoryl-MurNAc-(pentapeptide)GlcNAc (lipid intermediate II). The protein is UDP-N-acetylglucosamine--N-acetylmuramyl-(pentapeptide) pyrophosphoryl-undecaprenol N-acetylglucosamine transferase of Phocaeicola vulgatus (strain ATCC 8482 / DSM 1447 / JCM 5826 / CCUG 4940 / NBRC 14291 / NCTC 11154) (Bacteroides vulgatus).